We begin with the raw amino-acid sequence, 309 residues long: 4-hydroxy-3-methylbut-2-enyl diphosphate reductase (309 aa).

Cys13 contributes to the [4Fe-4S] cluster binding site. The (2E)-4-hydroxy-3-methylbut-2-enyl diphosphate site is built by His42 and His75. Dimethylallyl diphosphate contacts are provided by His42 and His75. Isopentenyl diphosphate-binding residues include His42 and His75. Cys97 serves as a coordination point for [4Fe-4S] cluster. Position 125 (His125) interacts with (2E)-4-hydroxy-3-methylbut-2-enyl diphosphate. Residue His125 participates in dimethylallyl diphosphate binding. His125 lines the isopentenyl diphosphate pocket. Catalysis depends on Glu127, which acts as the Proton donor. Thr165 is a (2E)-4-hydroxy-3-methylbut-2-enyl diphosphate binding site. Cys195 contacts [4Fe-4S] cluster. Ser223, Ser224, Asn225, and Ser267 together coordinate (2E)-4-hydroxy-3-methylbut-2-enyl diphosphate. Dimethylallyl diphosphate is bound by residues Ser223, Ser224, Asn225, and Ser267. Isopentenyl diphosphate is bound by residues Ser223, Ser224, Asn225, and Ser267.

Belongs to the IspH family. [4Fe-4S] cluster is required as a cofactor.

The enzyme catalyses isopentenyl diphosphate + 2 oxidized [2Fe-2S]-[ferredoxin] + H2O = (2E)-4-hydroxy-3-methylbut-2-enyl diphosphate + 2 reduced [2Fe-2S]-[ferredoxin] + 2 H(+). The catalysed reaction is dimethylallyl diphosphate + 2 oxidized [2Fe-2S]-[ferredoxin] + H2O = (2E)-4-hydroxy-3-methylbut-2-enyl diphosphate + 2 reduced [2Fe-2S]-[ferredoxin] + 2 H(+). It participates in isoprenoid biosynthesis; dimethylallyl diphosphate biosynthesis; dimethylallyl diphosphate from (2E)-4-hydroxy-3-methylbutenyl diphosphate: step 1/1. The protein operates within isoprenoid biosynthesis; isopentenyl diphosphate biosynthesis via DXP pathway; isopentenyl diphosphate from 1-deoxy-D-xylulose 5-phosphate: step 6/6. Functionally, catalyzes the conversion of 1-hydroxy-2-methyl-2-(E)-butenyl 4-diphosphate (HMBPP) into a mixture of isopentenyl diphosphate (IPP) and dimethylallyl diphosphate (DMAPP). Acts in the terminal step of the DOXP/MEP pathway for isoprenoid precursor biosynthesis. The polypeptide is 4-hydroxy-3-methylbut-2-enyl diphosphate reductase (Chlamydia felis (strain Fe/C-56) (Chlamydophila felis)).